The following is an 84-amino-acid chain: Antitoxin VapB30 (84 aa).

Antitoxin component of a type II toxin-antitoxin (TA) system. Upon expression in M.smegmatis neutralizes the effect of cognate toxin VapC30. This is Antitoxin VapB30 (vapB30) from Mycobacterium tuberculosis (strain ATCC 25618 / H37Rv).